We begin with the raw amino-acid sequence, 254 residues long: Sec-independent protein translocase protein TatC (254 aa).

Transmembrane regions (helical) follow at residues 40 to 60, 82 to 104, 125 to 145, 172 to 192, 210 to 230, and 233 to 253; these read IFLS…FVKP, FFFV…FILY, VVLG…YALI, FVLL…IQVV, FVIL…DPLT, and LLAG…RLLG.

Belongs to the TatC family. In terms of assembly, forms a complex with TatA.

The protein resides in the cell inner membrane. Its function is as follows. Part of the twin-arginine translocation (Tat) system that transports large folded proteins containing a characteristic twin-arginine motif in their signal peptide across membranes. The protein is Sec-independent protein translocase protein TatC of Synechocystis sp. (strain ATCC 27184 / PCC 6803 / Kazusa).